Reading from the N-terminus, the 282-residue chain is Hydroxyacylglutathione hydrolase-like protein (282 aa).

Residues His-54, His-56, Asp-58, His-59, His-110, Asp-134, and His-173 each coordinate Zn(2+).

This sequence belongs to the metallo-beta-lactamase superfamily. Glyoxalase II family. The cofactor is Zn(2+).

Hydrolase acting on ester bonds. This is Hydroxyacylglutathione hydrolase-like protein (HAGHL) from Gallus gallus (Chicken).